We begin with the raw amino-acid sequence, 285 residues long: Urease accessory protein UreD (285 aa).

The protein belongs to the UreD family. In terms of assembly, ureD, UreF and UreG form a complex that acts as a GTP-hydrolysis-dependent molecular chaperone, activating the urease apoprotein by helping to assemble the nickel containing metallocenter of UreC. The UreE protein probably delivers the nickel.

The protein resides in the cytoplasm. In terms of biological role, required for maturation of urease via the functional incorporation of the urease nickel metallocenter. In Picosynechococcus sp. (strain ATCC 27264 / PCC 7002 / PR-6) (Agmenellum quadruplicatum), this protein is Urease accessory protein UreD.